The sequence spans 139 residues: Probable transcription termination protein NusA (139 aa).

Positions 97–139 (STVAYAEVDRADTGVAIGRDGETIETARRLAERQFDIDDIELA) constitute a KH domain.

It belongs to the NusA family.

It is found in the cytoplasm. Its function is as follows. Participates in transcription termination. The protein is Probable transcription termination protein NusA of Halococcus morrhuae (Micrococcus morrhuae).